The chain runs to 468 residues: 6-phospho-beta-galactosidase (468 aa).

D-galactose 6-phosphate is bound by residues glutamine 19, histidine 116, asparagine 159, glutamate 160, and asparagine 297. Residue glutamate 160 is the Proton donor of the active site. Glutamate 375 acts as the Nucleophile in catalysis. The D-galactose 6-phosphate site is built by serine 428, tryptophan 429, lysine 435, and tyrosine 437.

It belongs to the glycosyl hydrolase 1 family.

The catalysed reaction is a 6-phospho-beta-D-galactoside + H2O = D-galactose 6-phosphate + an alcohol. It participates in carbohydrate metabolism; lactose degradation; D-galactose 6-phosphate and beta-D-glucose from lactose 6-phosphate: step 1/1. The polypeptide is 6-phospho-beta-galactosidase (Streptococcus pyogenes serotype M2 (strain MGAS10270)).